Reading from the N-terminus, the 225-residue chain is Uracil-DNA glycosylase (225 aa).

Residue Asp-65 is the Proton acceptor of the active site.

This sequence belongs to the uracil-DNA glycosylase (UDG) superfamily. UNG family.

The protein resides in the cytoplasm. It carries out the reaction Hydrolyzes single-stranded DNA or mismatched double-stranded DNA and polynucleotides, releasing free uracil.. Functionally, excises uracil residues from the DNA which can arise as a result of misincorporation of dUMP residues by DNA polymerase or due to deamination of cytosine. The chain is Uracil-DNA glycosylase from Bacillus cereus (strain B4264).